The sequence spans 210 residues: Large ribosomal subunit protein bL25 (210 aa).

The interval 1 to 23 (MSDIGTLSAKGRDRAGKGAARAT) is disordered.

This sequence belongs to the bacterial ribosomal protein bL25 family. CTC subfamily. In terms of assembly, part of the 50S ribosomal subunit; part of the 5S rRNA/L5/L18/L25 subcomplex. Contacts the 5S rRNA. Binds to the 5S rRNA independently of L5 and L18.

Functionally, this is one of the proteins that binds to the 5S RNA in the ribosome where it forms part of the central protuberance. This chain is Large ribosomal subunit protein bL25, found in Rhodospirillum rubrum (strain ATCC 11170 / ATH 1.1.1 / DSM 467 / LMG 4362 / NCIMB 8255 / S1).